The following is a 126-amino-acid chain: Small ribosomal subunit protein uS13 (126 aa).

The disordered stretch occupies residues 92-126; that stretch reads HRRGLPVRGQRTKTNARTRKGPKRTVAGKKKAGRK.

Belongs to the universal ribosomal protein uS13 family. In terms of assembly, part of the 30S ribosomal subunit. Forms a loose heterodimer with protein S19. Forms two bridges to the 50S subunit in the 70S ribosome.

Functionally, located at the top of the head of the 30S subunit, it contacts several helices of the 16S rRNA. In the 70S ribosome it contacts the 23S rRNA (bridge B1a) and protein L5 of the 50S subunit (bridge B1b), connecting the 2 subunits; these bridges are implicated in subunit movement. Contacts the tRNAs in the A and P-sites. This Kineococcus radiotolerans (strain ATCC BAA-149 / DSM 14245 / SRS30216) protein is Small ribosomal subunit protein uS13.